The sequence spans 213 residues: Thiopurine S-methyltransferase (213 aa).

S-adenosyl-L-methionine contacts are provided by tryptophan 10, leucine 45, glutamate 66, and arginine 121.

It belongs to the class I-like SAM-binding methyltransferase superfamily. TPMT family.

It is found in the cytoplasm. It catalyses the reaction S-adenosyl-L-methionine + a thiopurine = S-adenosyl-L-homocysteine + a thiopurine S-methylether.. The sequence is that of Thiopurine S-methyltransferase from Aliivibrio salmonicida (strain LFI1238) (Vibrio salmonicida (strain LFI1238)).